Reading from the N-terminus, the 155-residue chain is UPF0305 protein MTH_811 (155 aa).

This sequence belongs to the UPF0305 family.

The chain is UPF0305 protein MTH_811 from Methanothermobacter thermautotrophicus (strain ATCC 29096 / DSM 1053 / JCM 10044 / NBRC 100330 / Delta H) (Methanobacterium thermoautotrophicum).